Reading from the N-terminus, the 214-residue chain is Adenylate kinase (214 aa).

Position 10–15 (10–15 (GAGKGT)) interacts with ATP. The NMP stretch occupies residues 30–59 (STGDMLRAAVKAGTELGKQAKEIMDAGKLV). Residues Thr-31, Arg-36, 57 to 59 (KLV), 85 to 88 (GFPR), and Gln-92 contribute to the AMP site. Residues 122–159 (GRRVHAASGRVYHVKFNPPKVEGKDDVTGEDLTIRKDD) are LID. Residues Arg-123 and 132–133 (VY) each bind ATP. AMP contacts are provided by Arg-156 and Arg-167. Arg-200 is an ATP binding site.

The protein belongs to the adenylate kinase family. As to quaternary structure, monomer.

The protein localises to the cytoplasm. The catalysed reaction is AMP + ATP = 2 ADP. It functions in the pathway purine metabolism; AMP biosynthesis via salvage pathway; AMP from ADP: step 1/1. In terms of biological role, catalyzes the reversible transfer of the terminal phosphate group between ATP and AMP. Plays an important role in cellular energy homeostasis and in adenine nucleotide metabolism. The protein is Adenylate kinase of Pectobacterium carotovorum subsp. carotovorum (strain PC1).